The sequence spans 573 residues: Solute carrier family 41 member 2 (573 aa).

Residues 1–162 (MTHSKGRPVT…KESSGVMALQ (162 aa)) lie on the Extracellular side of the membrane. A phosphoserine mark is found at Ser-137 and Ser-138. Residues 163 to 183 (ILVPFLLAGFGTVSAGMVLDI) form a helical membrane-spanning segment. At 184–195 (VQHWEVFKNVTE) the chain is on the cytoplasmic side. A helical membrane pass occupies residues 196–216 (VFILVPALLGLKGNLEMTLAS). The Extracellular segment spans residues 217-245 (RLSTAVNVGKMDSPIEKWNLIIGNLALKQ). A helical transmembrane segment spans residues 246 to 266 (VQATVVGFLAAVAAIILGWIP). Over 267 to 282 (EGKYYLSHSILLCSSS) the chain is Cytoplasmic. Residues 283 to 303 (VATAFIASLLQGIIMVGVIVG) traverse the membrane as a helical segment. Residues 304–313 (SKKTGINPDN) are Extracellular-facing. Residues 314–334 (VATPIAASFGDLITLAILAWI) traverse the membrane as a helical segment. At 335 to 347 (SQGLYSCLETYYY) the chain is on the cytoplasmic side. The chain crosses the membrane as a helical span at residues 348 to 368 (ISPLVCAFFLALTPIWIIIAA). Residues 369–376 (KHPATRTV) lie on the Extracellular side of the membrane. A helical membrane pass occupies residues 377–397 (LHSGWEPVITAMVISSIGGLI). Topologically, residues 398 to 406 (LDTTVSDPN) are cytoplasmic. A helical transmembrane segment spans residues 407 to 427 (LVGIVVYTPVINGIGGNLVAI). Residues 428–469 (QASRISTYLHLHSIPGELPEEPKGCSYPFRTFFGSGVNNKSA) are Extracellular-facing. Residues 470 to 490 (QVLLLFVIPGHLIFLYTIHLM) traverse the membrane as a helical segment. Topologically, residues 491–498 (KSGHTSLT) are cytoplasmic. A helical transmembrane segment spans residues 499 to 519 (VVFVVVYLFAAVLQVFTLLWI). Topologically, residues 520–543 (ADWMVHRFWRKGKDPDSFSIPYLT) are extracellular. A helical transmembrane segment spans residues 544–564 (ALGDLLGTALLALSFHFLWLI). Over 565 to 573 (GDRDGDVGD) the chain is Cytoplasmic.

This sequence belongs to the SLC41A transporter family.

It localises to the cell membrane. It catalyses the reaction Mg(2+)(in) = Mg(2+)(out). It carries out the reaction Mn(2+)(in) = Mn(2+)(out). The catalysed reaction is Co(2+)(in) = Co(2+)(out). The enzyme catalyses Ni(2+)(in) = Ni(2+)(out). It catalyses the reaction Fe(2+)(in) = Fe(2+)(out). Acts as a plasma-membrane magnesium transporter. Can also mediate the transport of other divalent metal cations in an order of Ba(2+) &gt; Ni(2+) &gt; Co(2+) &gt; Fe(2+) &gt; Mn(2+). This is Solute carrier family 41 member 2 (Slc41a2) from Mus musculus (Mouse).